The chain runs to 269 residues: Autophagy-related protein 27 (269 aa).

The N-terminal stretch at 1-17 is a signal peptide; sequence MWAIAGLISVLLAQAAA. In terms of domain architecture, MRH spans 18–175; that stretch reads FDCSAKELEH…SMYSKAACIT (158 aa). The Lumenal segment spans residues 18-193; sequence FDCSAKELEH…PPKKPDNGES (176 aa). 3 disulfides stabilise this stretch: cysteine 20–cysteine 59, cysteine 69–cysteine 76, and cysteine 141–cysteine 173. The helical transmembrane segment at 194 to 214 threads the bilayer; it reads WGWFTWIFIFLVLFLSIYIVG. Residues 215–269 are Cytoplasmic-facing; sequence GAWFQYNKGNAIDFSSALREVLDNFVELLKGIPAFSREIIEKFTSNSNRGEYSAV.

The protein belongs to the ATG27 family.

The protein localises to the cytoplasmic vesicle membrane. It localises to the golgi apparatus membrane. The protein resides in the mitochondrion membrane. Its subcellular location is the preautophagosomal structure membrane. In terms of biological role, effector of VPS34 phosphatidylinositol 3-phosphate kinase signaling. Regulates the cytoplasm to vacuole transport (Cvt) vesicle formation. Plays a role in ATG protein retrieval from the pre-autophagosomal structure (PAS) and is especially required for autophagy-dependent cycling of ATG9. The polypeptide is Autophagy-related protein 27 (ATG27) (Scheffersomyces stipitis (strain ATCC 58785 / CBS 6054 / NBRC 10063 / NRRL Y-11545) (Yeast)).